We begin with the raw amino-acid sequence, 263 residues long: tRNA pseudouridine synthase A (263 aa).

Asp-51 acts as the Nucleophile in catalysis. Tyr-109 provides a ligand contact to substrate.

It belongs to the tRNA pseudouridine synthase TruA family. In terms of assembly, homodimer.

The enzyme catalyses uridine(38/39/40) in tRNA = pseudouridine(38/39/40) in tRNA. Formation of pseudouridine at positions 38, 39 and 40 in the anticodon stem and loop of transfer RNAs. The polypeptide is tRNA pseudouridine synthase A (Pseudoalteromonas atlantica (strain T6c / ATCC BAA-1087)).